The following is a 352-amino-acid chain: Biotin synthase (352 aa).

The Radical SAM core domain occupies asparagine 41–arginine 268. Residues cysteine 56, cysteine 60, and cysteine 63 each coordinate [4Fe-4S] cluster. Cysteine 100, cysteine 131, cysteine 191, and arginine 263 together coordinate [2Fe-2S] cluster.

It belongs to the radical SAM superfamily. Biotin synthase family. Homodimer. It depends on [4Fe-4S] cluster as a cofactor. The cofactor is [2Fe-2S] cluster.

It catalyses the reaction (4R,5S)-dethiobiotin + (sulfur carrier)-SH + 2 reduced [2Fe-2S]-[ferredoxin] + 2 S-adenosyl-L-methionine = (sulfur carrier)-H + biotin + 2 5'-deoxyadenosine + 2 L-methionine + 2 oxidized [2Fe-2S]-[ferredoxin]. It participates in cofactor biosynthesis; biotin biosynthesis; biotin from 7,8-diaminononanoate: step 2/2. Catalyzes the conversion of dethiobiotin (DTB) to biotin by the insertion of a sulfur atom into dethiobiotin via a radical-based mechanism. This Marinobacter nauticus (strain ATCC 700491 / DSM 11845 / VT8) (Marinobacter aquaeolei) protein is Biotin synthase.